A 210-amino-acid chain; its full sequence is Large ribosomal subunit protein bL25 (210 aa).

The interval 175 to 210 (IATILPPQQEEEIDSGEQQEAGQPDAAEGRETTPEE) is disordered. Positions 201-210 (AEGRETTPEE) are enriched in basic and acidic residues.

This sequence belongs to the bacterial ribosomal protein bL25 family. CTC subfamily. In terms of assembly, part of the 50S ribosomal subunit; part of the 5S rRNA/L5/L18/L25 subcomplex. Contacts the 5S rRNA. Binds to the 5S rRNA independently of L5 and L18.

Its function is as follows. This is one of the proteins that binds to the 5S RNA in the ribosome where it forms part of the central protuberance. This Geobacillus kaustophilus (strain HTA426) protein is Large ribosomal subunit protein bL25.